The chain runs to 506 residues: WD repeat-containing protein 55 homolog (506 aa).

Basic and acidic residues predominate over residues 1 to 11 (MHRHDCFKTPA). Disordered stretches follow at residues 1–20 (MHRH…DDID), 33–87 (QEVL…SDDS), and 100–132 (AKRR…DEDD). The segment covering 33–48 (QEVLNESESDDDEYDL) has biased composition (acidic residues). Residues 61–74 (GNISSNESISSDGS) show a composition bias toward low complexity. Acidic residues predominate over residues 78–87 (NAEDTDSDDS). WD repeat units lie at residues 156–195 (RLED…NKLL), 200–239 (VHAK…LKKL), 243–281 (AHDD…AIFE), 284–323 (EVED…LYVQ), 326–365 (PYEE…YHCD), and 410–449 (QHNM…DFGD). Residues 480-506 (DMTKEQDDDDNDDGGNNTTAAGSNNVT) are disordered. Over residues 493–506 (GGNNTTAAGSNNVT) the composition is skewed to low complexity.

Belongs to the WD repeat WDR55 family.

The sequence is that of WD repeat-containing protein 55 homolog from Drosophila mojavensis (Fruit fly).